Reading from the N-terminus, the 136-residue chain is Histone H3 (136 aa).

The protein belongs to the histone H3 family. As to quaternary structure, the nucleosome is a histone octamer containing two molecules each of H2A, H2B, H3 and H4 assembled in one H3-H4 heterotetramer and two H2A-H2B heterodimers. The octamer wraps approximately 147 bp of DNA.

It is found in the nucleomorph. It localises to the chromosome. In terms of biological role, core component of nucleosome. Nucleosomes wrap and compact DNA into chromatin, limiting DNA accessibility to the cellular machineries which require DNA as a template. Histones thereby play a central role in transcription regulation, DNA repair, DNA replication and chromosomal stability. DNA accessibility is regulated via a complex set of post-translational modifications of histones, also called histone code, and nucleosome remodeling. This is Histone H3 from Guillardia theta (Cryptophyte).